The sequence spans 728 residues: Polyribonucleotide nucleotidyltransferase (728 aa).

Mg(2+) is bound by residues Asp-489 and Asp-495. In terms of domain architecture, KH spans 556-615 (PKIDTIKIDVDKIKIVIGKGGETIDKIIAETGVKIDIDEEGNVSIYSSDQDAINRAKEII). The 69-residue stretch at 625-693 (DEVYHAKVVR…AKGRVDASMK (69 aa)) folds into the S1 motif domain. The disordered stretch occupies residues 691–728 (SMKALLPRPPKPEKSDKHHDKGHPHKKHEEAPLTQTEE). Positions 700-709 (PKPEKSDKHH) are enriched in basic and acidic residues.

Belongs to the polyribonucleotide nucleotidyltransferase family. Requires Mg(2+) as cofactor.

Its subcellular location is the cytoplasm. The enzyme catalyses RNA(n+1) + phosphate = RNA(n) + a ribonucleoside 5'-diphosphate. In terms of biological role, involved in mRNA degradation. Catalyzes the phosphorolysis of single-stranded polyribonucleotides processively in the 3'- to 5'-direction. This is Polyribonucleotide nucleotidyltransferase from Streptococcus gordonii (strain Challis / ATCC 35105 / BCRC 15272 / CH1 / DL1 / V288).